The primary structure comprises 189 residues: Phosphoheptose isomerase (189 aa).

An SIS domain is found at 34–189 (VADTLKNGKK…CQAVDEAFRG (156 aa)). 49 to 51 (NGG) is a substrate binding site. Zn(2+) contacts are provided by His-58 and Glu-62. Substrate is bound by residues Glu-62, 91-92 (ND), 117-119 (STS), Ser-122, and Gln-169. Zn(2+)-binding residues include Gln-169 and His-177.

Belongs to the SIS family. GmhA subfamily. As to quaternary structure, homotetramer. Requires Zn(2+) as cofactor.

The protein resides in the cytoplasm. It carries out the reaction 2 D-sedoheptulose 7-phosphate = D-glycero-alpha-D-manno-heptose 7-phosphate + D-glycero-beta-D-manno-heptose 7-phosphate. It participates in carbohydrate biosynthesis; D-glycero-D-manno-heptose 7-phosphate biosynthesis; D-glycero-alpha-D-manno-heptose 7-phosphate and D-glycero-beta-D-manno-heptose 7-phosphate from sedoheptulose 7-phosphate: step 1/1. Catalyzes the isomerization of sedoheptulose 7-phosphate in D-glycero-D-manno-heptose 7-phosphate. This is Phosphoheptose isomerase from Campylobacter concisus (strain 13826).